A 61-amino-acid chain; its full sequence is Photosystem II reaction center protein K (61 aa).

A propeptide spanning residues methionine 1 to aspartate 24 is cleaved from the precursor. The helical transmembrane segment at isoleucine 36–alanine 56 threads the bilayer.

This sequence belongs to the PsbK family. As to quaternary structure, PSII is composed of 1 copy each of membrane proteins PsbA, PsbB, PsbC, PsbD, PsbE, PsbF, PsbH, PsbI, PsbJ, PsbK, PsbL, PsbM, PsbT, PsbX, PsbY, PsbZ, Psb30/Ycf12, at least 3 peripheral proteins of the oxygen-evolving complex and a large number of cofactors. It forms dimeric complexes.

Its subcellular location is the plastid. It is found in the chloroplast thylakoid membrane. Functionally, one of the components of the core complex of photosystem II (PSII). PSII is a light-driven water:plastoquinone oxidoreductase that uses light energy to abstract electrons from H(2)O, generating O(2) and a proton gradient subsequently used for ATP formation. It consists of a core antenna complex that captures photons, and an electron transfer chain that converts photonic excitation into a charge separation. This chain is Photosystem II reaction center protein K, found in Lotus japonicus (Lotus corniculatus var. japonicus).